We begin with the raw amino-acid sequence, 530 residues long: UDP-glucuronosyltransferase 2B17 (530 aa).

The N-terminal stretch at M1 to C23 is a signal peptide. N-linked (GlcNAc...) asparagine glycans are attached at residues N316 and N483. Residues V494–V510 traverse the membrane as a helical segment.

Belongs to the UDP-glycosyltransferase family.

The protein resides in the endoplasmic reticulum membrane. The catalysed reaction is glucuronate acceptor + UDP-alpha-D-glucuronate = acceptor beta-D-glucuronoside + UDP + H(+). It carries out the reaction 17alpha-estradiol + UDP-alpha-D-glucuronate = 17alpha-estradiol 3-O-(beta-D-glucuronate) + UDP + H(+). The enzyme catalyses 17alpha-estradiol + UDP-alpha-D-glucuronate = 17alpha-estradiol 17-O-(beta-D-glucuronate) + UDP + H(+). It catalyses the reaction 17beta-estradiol + UDP-alpha-D-glucuronate = 17beta-estradiol 17-O-(beta-D-glucuronate) + UDP + H(+). The catalysed reaction is 17beta-hydroxy-5alpha-androstan-3-one + UDP-alpha-D-glucuronate = 5alpha-dihydrotestosterone 17-O-(beta-D-glucuronate) + UDP + H(+). It carries out the reaction testosterone + UDP-alpha-D-glucuronate = testosterone 17-O-(beta-D-glucuronate) + UDP + H(+). Its function is as follows. UDP-glucuronosyltransferase (UGT) that catalyzes phase II biotransformation reactions in which lipophilic substrates are conjugated with glucuronic acid to increase the metabolite's water solubility, thereby facilitating excretion into either the urine or bile. Catalyzes the glucuronidation of endogenous steroid hormones such as androgens (epitestosterone, androsterone) and estrogens (estradiol, epiestradiol). The chain is UDP-glucuronosyltransferase 2B17 from Mus musculus (Mouse).